The chain runs to 399 residues: Ubiquitin-like modifier-activating enzyme 5 (399 aa).

Positions 76, 97, 120, 143, and 177 each coordinate ATP. 2 residues coordinate Zn(2+): Cys-219 and Cys-222. Cys-243 (glycyl thioester intermediate) is an active-site residue. Positions 296 and 301 each coordinate Zn(2+).

Belongs to the ubiquitin-activating E1 family. UBA5 subfamily.

In terms of biological role, E1-like enzyme which activates UFM1. The sequence is that of Ubiquitin-like modifier-activating enzyme 5 from Drosophila mojavensis (Fruit fly).